Consider the following 316-residue polypeptide: Cytochrome c oxidase assembly protein COX18, mitochondrial (316 aa).

Residues 164-184 (WKNALLPMVQIPLWVTVSMGI) traverse the membrane as a helical segment. The Mitochondrial matrix segment spans residues 185 to 213 (RTLTETQLIESFYPSWFSALGFSSFDLSS). A helical transmembrane segment spans residues 214–234 (PLVAMPLLAPILVGTLAVLNV). At 235–274 (ELNGRLMFSSSLSSQGIKTISRNSTRVQEAMTSILNVSRL) the chain is on the mitochondrial intermembrane side. A helical transmembrane segment spans residues 275 to 295 (GCVVMLAMSSQAPFLLSLYWI). Topologically, residues 296-316 (SSQLFSLVQNIILNWIYPYQR) are mitochondrial matrix.

This sequence belongs to the OXA1/ALB3/YidC family. As to quaternary structure, interacts with PNT1 and MSS2.

It localises to the mitochondrion inner membrane. Functionally, required for the insertion of integral membrane proteins into the mitochondrial inner membrane. Essential for the activity and assembly of cytochrome c oxidase. Plays a central role in the translocation and export of the C-terminal part of the COX2 protein into the mitochondrial intermembrane space. In Saccharomyces cerevisiae (strain ATCC 204508 / S288c) (Baker's yeast), this protein is Cytochrome c oxidase assembly protein COX18, mitochondrial (COX18).